The following is a 479-amino-acid chain: Sodium-coupled neutral amino acid transporter 5 (479 aa).

Topologically, residues 1-58 (MAISCAVGMEMQEPKMNGTLSTGAAAGYRQEREGFLPTTHGPAPGRKPVQFLDFEGKT) are cytoplasmic. A helical transmembrane segment spans residues 59–81 (SFGMSVFNLSNAIMGSGILGLAY). The Extracellular segment spans residues 82–97 (AMAHTGVIFFLALLLC). A helical membrane pass occupies residues 98 to 118 (IALLSSYSIHLLLTCASVVGI). The Cytoplasmic portion of the chain corresponds to 119-135 (RAYEQLGQRAFGPAGKV). Residues 136 to 156 (VVAIIICLHNVGAMSSYLFII) traverse the membrane as a helical segment. Residues 157 to 176 (KSELPLVIGTFLHMDPEGDW) are Extracellular-facing. Residues 177 to 197 (FLKGNLLIILVSLLIILPLAL) traverse the membrane as a helical segment. Topologically, residues 198 to 202 (MKHLG) are cytoplasmic. Residues 203 to 223 (YLGYTSSLSLTCMLFFLISVI) form a helical membrane-spanning segment. At 224–264 (YKKFQLGCVVSHNDTVVESEPAPLQAFNSSCEAKLFTVDSQ) the chain is on the extracellular side. The cysteines at positions 231 and 254 are disulfide-linked. Asn236 carries an N-linked (GlcNAc...) asparagine glycan. Residues 265-285 (MSYTVPIMAFAFVCHPEVLPI) traverse the membrane as a helical segment. Over 286 to 302 (YTELCCPTQRRMQAVAN) the chain is Cytoplasmic. The chain crosses the membrane as a helical span at residues 303-323 (MSIGAMFIMYGLTATFGYLTF). The Extracellular segment spans residues 324 to 341 (YSTVKAEMLEMYTQEDLL). A helical transmembrane segment spans residues 342–362 (ILCVRLAVLLAVTLTVPVVLF). Topologically, residues 363-383 (PIRRALQQLLFPSKAFSWPRH) are cytoplasmic. The helical transmembrane segment at 384 to 404 (VAIALILLILVNILVICVPTI) threads the bilayer. The Extracellular segment spans residues 405-406 (RD). The chain crosses the membrane as a helical span at residues 407–427 (IFGFIGSTSAPSLIFILPSVF). At 428-446 (YLRIVPADMEPLFSWPKIQ) the chain is on the cytoplasmic side. The chain crosses the membrane as a helical span at residues 447 to 467 (ALCFGVLGVLFMAISLGFMFA). Residues 468–479 (NWATGQSRMSGH) are Extracellular-facing.

This sequence belongs to the amino acid/polyamine transporter 2 family. In terms of tissue distribution, highly expressed in neocortex, hippocampus, striatum and spinal cord by astrocytes (at protein level). Expressed in brain, lung, stomach, kidney, spleen and testis. Expressed in the cerebral cortex between the second and third postnatal week, where expressed exclusively in glial cells from postnatal day 14 to adulthood (at protein level). Expressed in the cerebellum at post natal day 12 (P12). Expressed in liver. Expressed inside the cell body of the astrocytes.

The protein localises to the cell membrane. It catalyses the reaction L-serine(out) + Na(+)(out) + H(+)(in) = L-serine(in) + Na(+)(in) + H(+)(out). It carries out the reaction L-alanine(out) + Na(+)(out) + H(+)(in) = L-alanine(in) + Na(+)(in) + H(+)(out). The catalysed reaction is glycine(out) + Na(+)(out) + H(+)(in) = glycine(in) + Na(+)(in) + H(+)(out). The enzyme catalyses L-glutamine(out) + Na(+)(out) + H(+)(in) = L-glutamine(in) + Na(+)(in) + H(+)(out). It catalyses the reaction L-asparagine(out) + Na(+)(out) + H(+)(in) = L-asparagine(in) + Na(+)(in) + H(+)(out). It carries out the reaction L-histidine(out) + Na(+)(out) + H(+)(in) = L-histidine(in) + Na(+)(in) + H(+)(out). The catalysed reaction is L-cysteine(out) + Na(+)(out) + H(+)(in) = L-cysteine(in) + Na(+)(in) + H(+)(out). Its activity is regulated as follows. Not inhibited by lithium. Partial allosteric regulation on ions sodium binding. Functionally, symporter that cotransports neutral amino acids and sodium ions, coupled to an H(+) antiporter activity. Releases L-glutamine and glycine from astroglial cells and may participate in the glutamate/GABA-glutamine cycle and the NMDA receptors activation. In addition contributes significantly to L-glutamine uptake in retina, namely in ganglion and Mueller cells and, therefore participates in the retinal glutamate-glutamine cycle. The transport activity is pH sensitive, Li(+) tolerant, bidirectional and associated with large uncoupled fluxes of protons. The transport is electroneutral coupled to the cotransport of 1 Na(+) and the antiport of 1 H(+). May have particular importance for modulation of net hepatic glutamine flux. The polypeptide is Sodium-coupled neutral amino acid transporter 5 (Rattus norvegicus (Rat)).